Reading from the N-terminus, the 233-residue chain is C-type lectin domain-containing protein 87 (233 aa).

The signal sequence occupies residues 1–20 (MRFFRFLVFPVIAGLSSVLA). A glycan (N-linked (GlcNAc...) asparagine) is linked at Asn26. An O-linked (Xyl...) (chondroitin sulfate) serine glycan is attached at Ser32. Asn81 carries N-linked (GlcNAc...) asparagine glycosylation. The 131-residue stretch at 93 to 223 (FADSCYWIET…CTYLLYSICE (131 aa)) folds into the C-type lectin domain. Disulfide bonds link Cys114–Cys222 and Cys193–Cys214. Asn225 carries an N-linked (GlcNAc...) asparagine glycan.

The chain is C-type lectin domain-containing protein 87 from Caenorhabditis briggsae.